Here is a 68-residue protein sequence, read N- to C-terminus: MKPSEIREMSIEEIDAKIRELRLQLAKERGMLTMGTSLENPMVIRNLRRDIARLLTIKREKLREMRKK.

Belongs to the universal ribosomal protein uL29 family.

This chain is Large ribosomal subunit protein uL29 (rpl29), found in Pyrococcus abyssi (strain GE5 / Orsay).